A 468-amino-acid chain; its full sequence is Tissue alpha-L-fucosidase (468 aa).

The signal sequence occupies residues 1–29 (MRAPGERWRPAGAALWLLLLLLLLGATES). Thr-172 bears the Phosphothreonine mark. Asn-243, Asn-270, and Asn-384 each carry an N-linked (GlcNAc...) asparagine glycan.

It belongs to the glycosyl hydrolase 29 family. In terms of assembly, homotetramer.

It is found in the lysosome. It carries out the reaction an alpha-L-fucoside + H2O = L-fucose + an alcohol. It catalyses the reaction a neolactoside IV(2)-alpha-Fuc-nLc4Cer(d18:1(4E)) + H2O = a neolactoside nLc4Cer(d18:1(4E)) + L-fucose. The enzyme catalyses a neolactoside IV(2)-alpha-Fuc-nLc4Cer(d18:0) + H2O = a neolactoside nLc4Cer(d18:0) + L-fucose. Functionally, alpha-L-fucosidase is responsible for hydrolyzing the alpha-1,6-linked fucose joined to the reducing-end N-acetylglucosamine of the carbohydrate moieties of glycoproteins. The chain is Tissue alpha-L-fucosidase (FUCA1) from Macaca fascicularis (Crab-eating macaque).